Reading from the N-terminus, the 387-residue chain is Succinate--CoA ligase [ADP-forming] subunit beta (387 aa).

The 236-residue stretch at 9–244 folds into the ATP-grasp domain; the sequence is KQLFAEYGIP…KTQEDETEVL (236 aa). Residues Lys-46, 53–55, Gly-102, and Glu-107 contribute to the ATP site; that span reads GRG. Mg(2+)-binding residues include Asn-199 and Asp-213. Residues Asn-264 and 321 to 323 each bind substrate; that span reads GIV.

Belongs to the succinate/malate CoA ligase beta subunit family. In terms of assembly, heterotetramer of two alpha and two beta subunits. Requires Mg(2+) as cofactor.

The enzyme catalyses succinate + ATP + CoA = succinyl-CoA + ADP + phosphate. The catalysed reaction is GTP + succinate + CoA = succinyl-CoA + GDP + phosphate. It participates in carbohydrate metabolism; tricarboxylic acid cycle; succinate from succinyl-CoA (ligase route): step 1/1. In terms of biological role, succinyl-CoA synthetase functions in the citric acid cycle (TCA), coupling the hydrolysis of succinyl-CoA to the synthesis of either ATP or GTP and thus represents the only step of substrate-level phosphorylation in the TCA. The beta subunit provides nucleotide specificity of the enzyme and binds the substrate succinate, while the binding sites for coenzyme A and phosphate are found in the alpha subunit. In Xylella fastidiosa (strain 9a5c), this protein is Succinate--CoA ligase [ADP-forming] subunit beta.